Consider the following 491-residue polypeptide: MPGLLVAGTTSDAGKSTLTAGLCRAFARRGVRVAPFKAQNMSNNSMVCQGPGGAGVEIGRAQWVQALAANATPEAAMNPVLLKPGSDHRSHVVLMGRSWGELASSNWFEGRQVLAETAHRAFDDLAARYDVVVAEGAGSPAEINLRAGDYVNMGLACHAELPTIVVGDIDRGGVFAAFFGTIALLSAEDQALVAGFVVNKFRGDLDLLAPGLRDLEGVTGRQVFGTLPWHADLWLDSEDALDLTGRRAASTGAHRVAVVRLPRISNFTDVDALGLEPDLDVVFASDPRGLGDADLIVVPGTRATIADLAWLRARGLDRALMAHVAAGKPLLGICGGFQMLGRVIRDPDGVEGPVAEADGLGLLDVETTFGAEKVLRLPRGQGLGVTASGYEIHHGRITAGDAAQQFLGGARDGQVFGTMWHGSLEGDALREAFLRETLGLTGSGTSFSAARERRLDLLGDLVERHLDVDALLALARHGCAPALPFLPPGAP.

In terms of domain architecture, GATase cobBQ-type spans 253 to 429; the sequence is AHRVAVVRLP…WHGSLEGDAL (177 aa). Cys334 (nucleophile) is an active-site residue. His421 is an active-site residue.

This sequence belongs to the CobB/CobQ family. CobQ subfamily.

It functions in the pathway cofactor biosynthesis; adenosylcobalamin biosynthesis. In terms of biological role, catalyzes amidations at positions B, D, E, and G on adenosylcobyrinic A,C-diamide. NH(2) groups are provided by glutamine, and one molecule of ATP is hydrogenolyzed for each amidation. The chain is Cobyric acid synthase from Mycobacterium marinum (strain ATCC BAA-535 / M).